The following is a 1552-amino-acid chain: ABC multidrug transporter lscH (1552 aa).

Helical transmembrane passes span 32 to 52 (ETIL…IPII) and 68 to 88 (WFKK…VGLW). Asn-91 is a glycosylation site (N-linked (GlcNAc...) asparagine). Helical transmembrane passes span 100–120 (STPS…LSTI), 158–178 (HSAI…MLLL), 280–300 (LFQI…IELA), 311–331 (NGYG…VSVG), 413–433 (AACV…VFLA), 457–477 (ALAS…FSVI), 500–520 (ILSI…FAGI), and 528–548 (LTIA…SPLA). Positions 280–559 (LFQIGFTYAQ…IVQALPQISG (280 aa)) constitute an ABC transmembrane type-1 1 domain. Positions 573–655 (AEERHDPRST…PDANGDSRDA (83 aa)) are disordered. The span at 581 to 602 (STTTGTSPESNNGSQQTLSDKQ) shows a compositional bias: polar residues. Asn-592 is a glycosylation site (N-linked (GlcNAc...) asparagine). In terms of domain architecture, ABC transporter 1 spans 639 to 884 (GHLADTTPDA…AELGWADRDL (246 aa)). 676–683 (GPVGCGKS) contacts ATP. Residues Asn-719 and Asn-834 are each glycosylated (N-linked (GlcNAc...) asparagine). Basic and acidic residues predominate over residues 887 to 912 (QQEKPGKDELNHEHGEYSESAPEKLR). Positions 887–917 (QQEKPGKDELNHEHGEYSESAPEKLRRSQTN) are disordered. A run of 2 helical transmembrane segments spans residues 957–977 (GWLT…CDSF) and 1005–1025 (AVLG…LFII). In terms of domain architecture, ABC transmembrane type-1 2 spans 963–1241 (IFVIAICVYA…ATITSWVTLE (279 aa)). N-linked (GlcNAc...) asparagine glycosylation occurs at Asn-1028. 4 consecutive transmembrane segments (helical) span residues 1076-1096 (AALG…LVCV), 1100-1120 (YMAA…HFYL), 1184-1204 (WITF…IVLT), and 1210-1230 (AIGP…SATM). An ABC transporter 2 domain is found at 1295–1538 (IELDNVTASY…PTSIFKELYL (244 aa)). N-linked (GlcNAc...) asparagine glycosylation is found at Asn-1299 and Asn-1313. 1328-1335 (GRTGSGKS) is a binding site for ATP.

The protein belongs to the ABC transporter superfamily. ABCC family. Conjugate transporter (TC 3.A.1.208) subfamily.

Its subcellular location is the cell membrane. Its function is as follows. ABC multidrug transporter; part of the gene cluster that mediates the biosynthesis of the lipopeptide antibiotics leucinostatins that show extensive biological activities, including antimalarial, antiviral, antibacterial, antifungal, and antitumor activities, as well as phytotoxic. May be involved in the efflux of leucinostatins. In Purpureocillium lilacinum (Paecilomyces lilacinus), this protein is ABC multidrug transporter lscH.